Reading from the N-terminus, the 548-residue chain is Synaptic vesicle 2-related protein (548 aa).

At 1–87 (MEEDLFQLRQ…GFGRFQWKLS (87 aa)) the chain is on the cytoplasmic side. A phosphoserine mark is found at serine 25 and serine 31. The helical transmembrane segment at 88–108 (VLTGLAWMADAMEMMILSILA) threads the bilayer. The Vesicular segment spans residues 109-122 (PQLHCEWRLPSWQV). A helical membrane pass occupies residues 123–143 (ALLTSVVFIGMMSSSTLWGNI). Topologically, residues 144 to 156 (SDQYGRKTGLKIS) are cytoplasmic. A helical transmembrane segment spans residues 157 to 177 (VFWTLYYGILSAFAPVYSWIL). Residues 178 to 180 (VLR) lie on the Vesicular side of the membrane. The helical transmembrane segment at 181 to 201 (GLVGFGIGGVPQSVTLYAEFL) threads the bilayer. Over 202-209 (PMKARAKC) the chain is Cytoplasmic. A helical membrane pass occupies residues 210 to 230 (ILLIEVFWAIGTVFEVLLAVF). The Vesicular segment spans residues 231-238 (VMPSLGWR). Residues 239–259 (WLLLLSAAPLLVFAVLCFWLP) form a helical membrane-spanning segment. Topologically, residues 260 to 316 (ESARYDVLSGNQEKAIATLKRIATENGAPMPLGKLIISRQEDRGKMRDLFTPHFRWT) are cytoplasmic. A helical transmembrane segment spans residues 317–337 (TLLLWFIWFSNAFSYYGLVLL). The Vesicular segment spans residues 338–373 (TTELFQAGDVCSISSRKKAVEAKCSLACEYLSKEDY). A helical transmembrane segment spans residues 374–394 (MDLLWTTLSEFPGVLVTLWVI). Topologically, residues 395–401 (DRLGRKK) are cytoplasmic. A helical transmembrane segment spans residues 402 to 422 (TMALCFVIFSLCSLLLFICIG). Over 423–424 (RN) the chain is Vesicular. The helical transmembrane segment at 425-445 (VLTLLLFIARAFISGGFQAAY) threads the bilayer. The Cytoplasmic segment spans residues 446–457 (VYTPEVYPTATR). The chain crosses the membrane as a helical span at residues 458 to 478 (ALGLGTCSGMARVGALITPFI). Over 479–489 (AQVMLESSVYL) the chain is Vesicular. The helical transmembrane segment at 490–510 (TLAVYSGCCLLAALASCFLPI) threads the bilayer. Residues 511–548 (ETKGRALQESSHREWGQEMVGRGTNSTGVPRSNSGSQE) are Cytoplasmic-facing. The segment at 523–548 (REWGQEMVGRGTNSTGVPRSNSGSQE) is disordered. Residues 533-548 (GTNSTGVPRSNSGSQE) show a composition bias toward polar residues. Position 542 is a phosphoserine (serine 542).

The protein belongs to the major facilitator superfamily. Detected in brain (at protein level). Detected in brain, in synaptic layers of the cerebellum, hippocampus and cerebral cortex.

It localises to the cytoplasmic vesicle. Its subcellular location is the secretory vesicle. The protein localises to the synaptic vesicle membrane. The polypeptide is Synaptic vesicle 2-related protein (Svop) (Rattus norvegicus (Rat)).